A 167-amino-acid polypeptide reads, in one-letter code: Caltractin (167 aa).

A compositionally biased stretch (basic residues) spans 1 to 18 (MSSARTVRKDKPRGRHHG). Residues 1–23 (MSSARTVRKDKPRGRHHGLTQQK) form a disordered region. EF-hand domains are found at residues 22–57 (QKRQEIKEAFELFDTDGSGTIDAKELNVAMRALGFE), 58–93 (MTEEQINQMIADVDKDGSGAIDFDEFCHMMTAKIGE), 95–130 (DTKEELMKAFRIIDQDNNGKISPEDIQRIAKELGEN), and 131–166 (FTVKDIQDMIEEADRDRDGEVNVEEFLRMMKRTSYA). Asp-35, Asp-37, Ser-39, Thr-41, Glu-46, Asp-71, Asp-73, Ser-75, Glu-82, Asp-108, Asp-110, Asn-112, Lys-114, Asp-119, Asp-144, Asp-146, Asp-148, Glu-150, and Glu-155 together coordinate Ca(2+).

It belongs to the centrin family.

Its subcellular location is the cytoplasm. It is found in the cytoskeleton. The protein resides in the microtubule organizing center. Its function is as follows. Plays a fundamental role in microtubule-organizing center structure and function. The protein is Caltractin of Atriplex nummularia (Old man saltbush).